A 704-amino-acid chain; its full sequence is Polyribonucleotide nucleotidyltransferase 4 (704 aa).

Asp483 and Asp489 together coordinate Mg(2+). Residues 550–609 (PRVLKMKIHPDKIRDVIGSGGKTINRIIDETGVKIDIDNDGTIFIAAESQEAVEKAIIII) enclose the KH domain. Residues 619–687 (GQNYTGKVIK…QQGKINLSRK (69 aa)) form the S1 motif domain.

Belongs to the polyribonucleotide nucleotidyltransferase family. The cofactor is Mg(2+).

It is found in the cytoplasm. The catalysed reaction is RNA(n+1) + phosphate = RNA(n) + a ribonucleoside 5'-diphosphate. Involved in mRNA degradation. Catalyzes the phosphorolysis of single-stranded polyribonucleotides processively in the 3'- to 5'-direction. This chain is Polyribonucleotide nucleotidyltransferase 4, found in Alkaliphilus metalliredigens (strain QYMF).